We begin with the raw amino-acid sequence, 560 residues long: Hemocyanin, units G and H (560 aa).

Cysteines 1 and 11 form a disulfide. Positions 1 to 184 (CPTPDAPQYA…AKGLVSQHIE (184 aa)) are unit G. The 2'-(S-cysteinyl)-histidine (Cys-His) cross-link spans 12 to 14 (CLH). An intrachain disulfide couples C93 to C98. N142 is a glycosylation site (N-linked (GlcNAc...) asparagine). The segment at 185–560 (DHDTETLIRK…KPGTGTQLTR (376 aa)) is unit H. H230 contributes to the Cu cation binding site. C236 and C246 are disulfide-bonded. Residue N240 is glycosylated (N-linked (GlcNAc...) asparagine). The segment at residues 247-249 (CQH) is a cross-link (2'-(S-cysteinyl)-histidine (Cys-His)). The Cu cation site is built by H249, H258, H358, H362, and H389. 2 disulfides stabilise this stretch: C348/C415 and C476/C482.

The protein belongs to the tyrosinase family. Hemocyanin subfamily. As to quaternary structure, decamers of large identical subunits (390 kDa), each containing 8 globular oxygen-binding functional units. Cu(2+) is required as a cofactor.

Hemocyanins are copper-containing oxygen carriers occurring freely dissolved in the hemolymph of many mollusks and arthropods. The polypeptide is Hemocyanin, units G and H (Sepia officinalis (Common cuttlefish)).